The primary structure comprises 217 residues: Probable GTP-binding protein EngB (217 aa).

The EngB-type G domain maps to 27 to 201 (TGIEVAFAGR…RDKLDTWFSE (175 aa)). GTP is bound by residues 35–42 (GRSNAGKS), 62–66 (GRTQL), 80–83 (DLPG), 147–150 (TKAD), and 180–182 (FSS). Residues serine 42 and threonine 64 each contribute to the Mg(2+) site.

This sequence belongs to the TRAFAC class TrmE-Era-EngA-EngB-Septin-like GTPase superfamily. EngB GTPase family. Mg(2+) serves as cofactor.

Functionally, necessary for normal cell division and for the maintenance of normal septation. The chain is Probable GTP-binding protein EngB from Edwardsiella ictaluri (strain 93-146).